The primary structure comprises 341 residues: Ribosomal RNA small subunit methyltransferase H (341 aa).

S-adenosyl-L-methionine contacts are provided by residues 47–49, Asp64, Phe91, Asp109, and Gln116; that span reads GGY.

This sequence belongs to the methyltransferase superfamily. RsmH family.

It is found in the cytoplasm. The enzyme catalyses cytidine(1402) in 16S rRNA + S-adenosyl-L-methionine = N(4)-methylcytidine(1402) in 16S rRNA + S-adenosyl-L-homocysteine + H(+). Its function is as follows. Specifically methylates the N4 position of cytidine in position 1402 (C1402) of 16S rRNA. This chain is Ribosomal RNA small subunit methyltransferase H, found in Rhizobium rhizogenes (strain K84 / ATCC BAA-868) (Agrobacterium radiobacter).